The chain runs to 152 residues: MAKRVQLVLKEDILSLGKDGDVVEVAPGYARNFLLPHGKALPVTPAVMKQVEHRRAKQKEHEAALKDEALAFETALKTIGRFTVKKQVGDDGVLFGTVTNGDIAEAIEKATEKEIDRRTISVPEVHAIGQYKVQIKLHHEVTAEINLEVVSY.

This sequence belongs to the bacterial ribosomal protein bL9 family.

In terms of biological role, binds to the 23S rRNA. This chain is Large ribosomal subunit protein bL9, found in Prochlorococcus marinus (strain MIT 9211).